Here is a 229-residue protein sequence, read N- to C-terminus: ATP synthase subunit a 1 (229 aa).

Helical transmembrane passes span 25 to 45 (ADAVAYTWLIMLLLLLFSFLA), 86 to 106 (VATVGLFVLVSNLIGLIPGFF), 111 to 131 (NINTTAACAIVVFIATHVVGI), 142 to 162 (FCGPILWLAPVMFFIEVIGHL), 181 to 201 (LVLIIFFGLAPFLVPLPMMLM), and 202 to 222 (GVLVSFIQAFVFMLLTMIYIQ).

The protein belongs to the ATPase A chain family. As to quaternary structure, F-type ATPases have 2 components, CF(1) - the catalytic core - and CF(0) - the membrane proton channel. CF(1) has five subunits: alpha(3), beta(3), gamma(1), delta(1), epsilon(1). CF(0) has three main subunits: a(1), b(2) and c(9-12). The alpha and beta chains form an alternating ring which encloses part of the gamma chain. CF(1) is attached to CF(0) by a central stalk formed by the gamma and epsilon chains, while a peripheral stalk is formed by the delta and b chains.

The protein resides in the cell inner membrane. Functionally, key component of the proton channel; it plays a direct role in the translocation of protons across the membrane. This chain is ATP synthase subunit a 1, found in Pelobacter propionicus (strain DSM 2379 / NBRC 103807 / OttBd1).